A 463-amino-acid chain; its full sequence is MSLRIYNTLSRAVEDFSPLVPGQVRMYVCGMTIYDLCHIGHARMMMAFDVVQRWLKASGYEVRYVRNITDIDDKIIKRAVERGITIRALTDEMIAAMHQDIGALGIEPPTLEPRATEYVPQMLAMIGKLEEKGLAYRGSSGDMNYAVRKFPGYGKLSGKSLDELRAGERVAVLEGKDDPLDFVLWKSAKESEPEDAKWDSAALGHDYGKGRPGWHIECSAMSCQTLGETFDIHGGGADLQFPHHENEIAQSEGANGKPLARFWVHNGFVRVDNEKMSKSLGNFFTIRDVLQKYDAETIRFFIIRAHYRSALNYSDAHLDDARNSLKRLYTALALVAPATVEIDWADPFAARFKAAMDEDFGTPEAIAVLFELAGEVNKTHSAERAGLLKSLGACLGLLQGEPSAYLQAGAGLDDAAIQALITQRADAKKARDFAAADRIRTELLGQGIVLKDSPLGTTWEVQS.

Position 29 (Cys-29) interacts with Zn(2+). A 'HIGH' region motif is present at residues 31-41; it reads MTIYDLCHIGH. Cys-218, His-243, and Glu-247 together coordinate Zn(2+). The 'KMSKS' region signature appears at 275–279; the sequence is KMSKS. Residue Lys-278 participates in ATP binding.

It belongs to the class-I aminoacyl-tRNA synthetase family. Monomer. It depends on Zn(2+) as a cofactor.

The protein localises to the cytoplasm. The catalysed reaction is tRNA(Cys) + L-cysteine + ATP = L-cysteinyl-tRNA(Cys) + AMP + diphosphate. This is Cysteine--tRNA ligase from Polaromonas naphthalenivorans (strain CJ2).